The following is an 80-amino-acid chain: ATP synthase subunit c (80 aa).

The next 2 helical transmembrane spans lie at 11 to 31 and 53 to 73; these read MAAA…IGIL and FFVV…LGLY.

Belongs to the ATPase C chain family. As to quaternary structure, F-type ATPases have 2 components, F(1) - the catalytic core - and F(0) - the membrane proton channel. F(1) has five subunits: alpha(3), beta(3), gamma(1), delta(1), epsilon(1). F(0) has three main subunits: a(1), b(2) and c(10-14). The alpha and beta chains form an alternating ring which encloses part of the gamma chain. F(1) is attached to F(0) by a central stalk formed by the gamma and epsilon chains, while a peripheral stalk is formed by the delta and b chains.

The protein resides in the cell inner membrane. Its function is as follows. F(1)F(0) ATP synthase produces ATP from ADP in the presence of a proton or sodium gradient. F-type ATPases consist of two structural domains, F(1) containing the extramembraneous catalytic core and F(0) containing the membrane proton channel, linked together by a central stalk and a peripheral stalk. During catalysis, ATP synthesis in the catalytic domain of F(1) is coupled via a rotary mechanism of the central stalk subunits to proton translocation. Functionally, key component of the F(0) channel; it plays a direct role in translocation across the membrane. A homomeric c-ring of between 10-14 subunits forms the central stalk rotor element with the F(1) delta and epsilon subunits. This chain is ATP synthase subunit c, found in Erwinia tasmaniensis (strain DSM 17950 / CFBP 7177 / CIP 109463 / NCPPB 4357 / Et1/99).